The following is a 360-amino-acid chain: Phosphate acyltransferase (360 aa).

Belongs to the PlsX family. Homodimer. Probably interacts with PlsY.

The protein resides in the cytoplasm. The catalysed reaction is a fatty acyl-[ACP] + phosphate = an acyl phosphate + holo-[ACP]. The protein operates within lipid metabolism; phospholipid metabolism. Functionally, catalyzes the reversible formation of acyl-phosphate (acyl-PO(4)) from acyl-[acyl-carrier-protein] (acyl-ACP). This enzyme utilizes acyl-ACP as fatty acyl donor, but not acyl-CoA. The sequence is that of Phosphate acyltransferase from Janthinobacterium sp. (strain Marseille) (Minibacterium massiliensis).